Reading from the N-terminus, the 115-residue chain is Large ribosomal subunit protein bL19 (115 aa).

Belongs to the bacterial ribosomal protein bL19 family.

This protein is located at the 30S-50S ribosomal subunit interface and may play a role in the structure and function of the aminoacyl-tRNA binding site. In Thermosipho melanesiensis (strain DSM 12029 / CIP 104789 / BI429), this protein is Large ribosomal subunit protein bL19.